Here is a 362-residue protein sequence, read N- to C-terminus: Histidinol-phosphate aminotransferase (362 aa).

Lysine 218 carries the post-translational modification N6-(pyridoxal phosphate)lysine.

This sequence belongs to the class-II pyridoxal-phosphate-dependent aminotransferase family. Histidinol-phosphate aminotransferase subfamily. Homodimer. Requires pyridoxal 5'-phosphate as cofactor.

The enzyme catalyses L-histidinol phosphate + 2-oxoglutarate = 3-(imidazol-4-yl)-2-oxopropyl phosphate + L-glutamate. It functions in the pathway amino-acid biosynthesis; L-histidine biosynthesis; L-histidine from 5-phospho-alpha-D-ribose 1-diphosphate: step 7/9. The sequence is that of Histidinol-phosphate aminotransferase from Xanthomonas campestris pv. campestris (strain B100).